We begin with the raw amino-acid sequence, 86 residues long: MANSLRSEVIKLYKNLLYLGREYPKGADYFRRRLKAAFLKNKDETDPEKIKQLIARGEFVIKELEALYFLRKYRAMKKRYYSDDKP.

Belongs to the complex I LYR family.

The protein resides in the mitochondrion. In terms of biological role, acts as a regulator of the electron transfer flavoprotein by promoting the removal of flavin from the ETF holoenzyme (composed of ETFA and ETFB). The polypeptide is Electron transfer flavoprotein regulatory factor 1 (Taeniopygia guttata (Zebra finch)).